The following is a 202-amino-acid chain: MLDLLKISVTGDPSSGKTEACQVFEDLGAYVISADKVSHSFLVPYTSVGQRIIDLLGPEIIIENTLSRKAIAEKVFGNRDLLLSLEEILHPEVCRFVEEKYAHVVQEQKYPLFIAEFPLLYEIQYADWFDQVILISADTGIRKERFLKKTGGSDTSFDLRCARFSSLEEKILRADVVIENNGTKEEFRRKVKQCFKALKGTI.

In terms of domain architecture, DPCK spans 6–202 (KISVTGDPSS…QCFKALKGTI (197 aa)). 14–19 (SSGKTE) is an ATP binding site.

Belongs to the CoaE family.

It localises to the cytoplasm. The enzyme catalyses 3'-dephospho-CoA + ATP = ADP + CoA + H(+). Its pathway is cofactor biosynthesis; coenzyme A biosynthesis; CoA from (R)-pantothenate: step 5/5. In terms of biological role, catalyzes the phosphorylation of the 3'-hydroxyl group of dephosphocoenzyme A to form coenzyme A. The sequence is that of Dephospho-CoA kinase from Chlamydia trachomatis serovar D (strain ATCC VR-885 / DSM 19411 / UW-3/Cx).